Reading from the N-terminus, the 112-residue chain is T cell receptor alpha variable 9-2 (112 aa).

Positions Met1–Gly20 are cleaved as a signal peptide. Residues Asp21–Ser112 form the Ig-like domain. Residue Asn41 is glycosylated (N-linked (GlcNAc...) asparagine). An intrachain disulfide couples Cys42 to Cys109.

In terms of assembly, alpha-beta TR is a heterodimer composed of an alpha and beta chain; disulfide-linked. The alpha-beta TR is associated with the transmembrane signaling CD3 coreceptor proteins to form the TR-CD3 (TcR or TCR). The assembly of alpha-beta TR heterodimers with CD3 occurs in the endoplasmic reticulum where a single alpha-beta TR heterodimer associates with one CD3D-CD3E heterodimer, one CD3G-CD3E heterodimer and one CD247 homodimer forming a stable octameric structure. CD3D-CD3E and CD3G-CD3E heterodimers preferentially associate with TR alpha and TR beta chains, respectively. The association of the CD247 homodimer is the last step of TcR assembly in the endoplasmic reticulum and is required for transport to the cell surface.

Its subcellular location is the cell membrane. Functionally, v region of the variable domain of T cell receptor (TR) alpha chain that participates in the antigen recognition. Alpha-beta T cell receptors are antigen specific receptors which are essential to the immune response and are present on the cell surface of T lymphocytes. Recognize peptide-major histocompatibility (MH) (pMH) complexes that are displayed by antigen presenting cells (APC), a prerequisite for efficient T cell adaptive immunity against pathogens. Binding of alpha-beta TR to pMH complex initiates TR-CD3 clustering on the cell surface and intracellular activation of LCK that phosphorylates the ITAM motifs of CD3G, CD3D, CD3E and CD247 enabling the recruitment of ZAP70. In turn ZAP70 phosphorylates LAT, which recruits numerous signaling molecules to form the LAT signalosome. The LAT signalosome propagates signal branching to three major signaling pathways, the calcium, the mitogen-activated protein kinase (MAPK) kinase and the nuclear factor NF-kappa-B (NF-kB) pathways, leading to the mobilization of transcription factors that are critical for gene expression and essential for T cell growth and differentiation. The T cell repertoire is generated in the thymus, by V-(D)-J rearrangement. This repertoire is then shaped by intrathymic selection events to generate a peripheral T cell pool of self-MH restricted, non-autoaggressive T cells. Post-thymic interaction of alpha-beta TR with the pMH complexes shapes TR structural and functional avidity. In Homo sapiens (Human), this protein is T cell receptor alpha variable 9-2.